Here is a 161-residue protein sequence, read N- to C-terminus: MAENNRAVVKLKERFANALLDCTEYRGEVTVTVKKENILEVLKCLRDDLRYNFLTDVTAVDYLGQDPRFMVVYHLMSIPNKDRIRVKAPLTEADCSIDSATALWNSADWVEREAYDMFGIDFKNHPNLVRILMTDDWVGHPLRKDYPLQGPDREPYKGRLS.

Belongs to the complex I 30 kDa subunit family. As to quaternary structure, NDH-1 is composed of 14 different subunits. Subunits NuoB, C, D, E, F, and G constitute the peripheral sector of the complex.

The protein resides in the cell inner membrane. The enzyme catalyses a quinone + NADH + 5 H(+)(in) = a quinol + NAD(+) + 4 H(+)(out). In terms of biological role, NDH-1 shuttles electrons from NADH, via FMN and iron-sulfur (Fe-S) centers, to quinones in the respiratory chain. The immediate electron acceptor for the enzyme in this species is believed to be ubiquinone. Couples the redox reaction to proton translocation (for every two electrons transferred, four hydrogen ions are translocated across the cytoplasmic membrane), and thus conserves the redox energy in a proton gradient. The sequence is that of NADH-quinone oxidoreductase subunit C from Citrifermentans bemidjiense (strain ATCC BAA-1014 / DSM 16622 / JCM 12645 / Bem) (Geobacter bemidjiensis).